The primary structure comprises 255 residues: MNTKAVNLKSENTTKLVSYLTENQLDEFIRRIRIDGALVEEVSQNAKQALDNTGLNGWINTDCDEGLLSDFISKIASARWIPLAESIRPAVTDRDKYRVSCWFYQGMNIAIYANIGGVANIIGYTEAAVATLLGAVVAVAPVVPGTPTPPKDKSSQYKEVPLAVRLSETYHEEGVRGLFDELNYSESRMISTLRRASTDGVLINSWNDGQDTILLKKYNFQDLQLTVRSRIVGNQTIIEECKITDGRKTLSDETV.

2 propeptides span residues 1–101 and 145–255; these read MNTK…RVSC and GTPT…DETV.

Its subcellular location is the secreted. Functionally, bacteriocin with specific antibacterial activity against strains of P.freudenreichii. No antibacterial activity was detected against P.acidipropionici, P.jensenii and P.thoenii. This is Propionicin-F from Propionibacterium freudenreichii subsp. freudenreichii.